Here is a 299-residue protein sequence, read N- to C-terminus: ClpXP adapter protein SpxH (299 aa).

The protein belongs to the SpxH family. In terms of assembly, interacts with Spx. Interacts with SpxO/YuzO.

It is found in the cytoplasm. Its activity is regulated as follows. Irreversible aggregation upon several stress conditions prevents interaction with Spx and therefore leads to Spx stabilization. Inhibited by interaction with SpxO/YuzO. Functionally, adapter protein required for efficient degradation of Spx by ClpXP under non-stress conditions. Interaction with Spx stabilizes Spx and exposes the C-terminus of Spx for recognition and proteolysis by ClpXP. Is specific for Spx and does not enhance proteolysis by ClpCP protease. Probably binds 2 zinc ions. This chain is ClpXP adapter protein SpxH, found in Bacillus subtilis (strain 168).